The chain runs to 187 residues: Intraflagellar transport protein 22 homolog (187 aa).

GTP is bound by residues 10 to 17, 65 to 69, and 125 to 128; these read GPSECGKT, DCAGD, and HKPG.

The protein belongs to the small GTPase superfamily. Rab family.

This chain is Intraflagellar transport protein 22 homolog (ift22), found in Danio rerio (Zebrafish).